Reading from the N-terminus, the 228-residue chain is 2,3-bisphosphoglycerate-dependent phosphoglycerate mutase (228 aa).

Residues 8-15 (RHGQSQWN), 21-22 (TG), Arg60, 87-90 (ERHY), Lys98, 114-115 (RR), and 180-181 (GN) contribute to the substrate site. The active-site Tele-phosphohistidine intermediate is His9. Glu87 serves as the catalytic Proton donor/acceptor.

It belongs to the phosphoglycerate mutase family. BPG-dependent PGAM subfamily. In terms of assembly, homodimer.

The catalysed reaction is (2R)-2-phosphoglycerate = (2R)-3-phosphoglycerate. It functions in the pathway carbohydrate degradation; glycolysis; pyruvate from D-glyceraldehyde 3-phosphate: step 3/5. Functionally, catalyzes the interconversion of 2-phosphoglycerate and 3-phosphoglycerate. The sequence is that of 2,3-bisphosphoglycerate-dependent phosphoglycerate mutase from Novosphingobium aromaticivorans (strain ATCC 700278 / DSM 12444 / CCUG 56034 / CIP 105152 / NBRC 16084 / F199).